Consider the following 337-residue polypeptide: Holliday junction branch migration complex subunit RuvB (337 aa).

The tract at residues 1–27 (MIEADRLVHAQPQGTEERDEQIDRAMR) is disordered. The tract at residues 4 to 187 (ADRLVHAQPQ…FGIPLRLEFY (184 aa)) is large ATPase domain (RuvB-L). Residues Arg27, Gly68, Lys71, Thr72, Thr73, 134–136 (EDY), Arg177, Tyr187, and Arg224 each bind ATP. Thr72 contacts Mg(2+). Positions 188–258 (NVKDLSSIVT…VAESALDMLD (71 aa)) are small ATPAse domain (RuvB-S). The tract at residues 261-337 (VEGFDYMDRK…YQHFNLIQPE (77 aa)) is head domain (RuvB-H). Residues Arg297, Arg316, and Arg321 each coordinate DNA.

This sequence belongs to the RuvB family. In terms of assembly, homohexamer. Forms an RuvA(8)-RuvB(12)-Holliday junction (HJ) complex. HJ DNA is sandwiched between 2 RuvA tetramers; dsDNA enters through RuvA and exits via RuvB. An RuvB hexamer assembles on each DNA strand where it exits the tetramer. Each RuvB hexamer is contacted by two RuvA subunits (via domain III) on 2 adjacent RuvB subunits; this complex drives branch migration. In the full resolvosome a probable DNA-RuvA(4)-RuvB(12)-RuvC(2) complex forms which resolves the HJ.

The protein resides in the cytoplasm. It catalyses the reaction ATP + H2O = ADP + phosphate + H(+). The RuvA-RuvB-RuvC complex processes Holliday junction (HJ) DNA during genetic recombination and DNA repair, while the RuvA-RuvB complex plays an important role in the rescue of blocked DNA replication forks via replication fork reversal (RFR). RuvA specifically binds to HJ cruciform DNA, conferring on it an open structure. The RuvB hexamer acts as an ATP-dependent pump, pulling dsDNA into and through the RuvAB complex. RuvB forms 2 homohexamers on either side of HJ DNA bound by 1 or 2 RuvA tetramers; 4 subunits per hexamer contact DNA at a time. Coordinated motions by a converter formed by DNA-disengaged RuvB subunits stimulates ATP hydrolysis and nucleotide exchange. Immobilization of the converter enables RuvB to convert the ATP-contained energy into a lever motion, pulling 2 nucleotides of DNA out of the RuvA tetramer per ATP hydrolyzed, thus driving DNA branch migration. The RuvB motors rotate together with the DNA substrate, which together with the progressing nucleotide cycle form the mechanistic basis for DNA recombination by continuous HJ branch migration. Branch migration allows RuvC to scan DNA until it finds its consensus sequence, where it cleaves and resolves cruciform DNA. The chain is Holliday junction branch migration complex subunit RuvB from Shewanella loihica (strain ATCC BAA-1088 / PV-4).